The primary structure comprises 211 residues: DNA dC-&gt;dU-editing enzyme APOBEC-3H (211 aa).

Positions leucine 4–leucine 126 constitute a CMP/dCMP-type deaminase domain. Histidine 54 lines the Zn(2+) pocket. Residue glutamate 56 is the Proton donor of the active site. Cysteine 85 and cysteine 88 together coordinate Zn(2+).

This sequence belongs to the cytidine and deoxycytidylate deaminase family. In terms of assembly, homodimer. It depends on Zn(2+) as a cofactor.

It localises to the cytoplasm. It carries out the reaction a 2'-deoxycytidine in single-stranded DNA + H2O + H(+) = a 2'-deoxyuridine in single-stranded DNA + NH4(+). DNA deaminase (cytidine deaminase) which may act as an inhibitor of retrovirus replication and retrotransposon mobility via deaminase-dependent and -independent mechanisms. The polypeptide is DNA dC-&gt;dU-editing enzyme APOBEC-3H (Pongo pygmaeus (Bornean orangutan)).